Consider the following 938-residue polypeptide: Catenin delta-1 (938 aa).

At Met-1 the chain carries N-acetylmethionine. Positions 1-357 are necessary and sufficient for interaction with CCDC85B; sequence MDDSEVESTA…ASLDSLRKGM (357 aa). Ser-4 bears the Phosphoserine mark. Residues 10-46 are a coiled coil; the sequence is ASILASVKEQEAQFEKLTRALEEERRHVSAQLERVRV. Phosphoserine is present on Ser-47. Thr-59 is subject to Phosphothreonine. Tyr-112 carries the phosphotyrosine; by FYN modification. Ser-125 is modified (phosphoserine). Tyr-217 and Tyr-221 each carry phosphotyrosine. Ser-225 carries the post-translational modification Phosphoserine. Tyr-228 carries the phosphotyrosine modification. Ser-230 and Ser-252 each carry phosphoserine. At Tyr-257 the chain carries Phosphotyrosine. Phosphoserine is present on residues Ser-268 and Ser-269. Tyr-280 carries the phosphotyrosine modification. Ser-288 carries the post-translational modification Phosphoserine. Tyr-291 carries the phosphotyrosine modification. A Phosphoserine modification is found at Ser-300. At Thr-304 the chain carries Phosphothreonine. 4 positions are modified to phosphoserine: Ser-320, Ser-346, Ser-349, and Ser-352. ARM repeat units follow at residues 358–395, 398–437, 441–475, and 476–516; these read PPPS…HLCY, DKVK…NISF, QDNK…ITGT, and LWNL…NEDC. Lys-421 participates in a covalent cross-link: Glycyl lysine isopeptide (Lys-Gly) (interchain with G-Cter in SUMO2). Lys-517 participates in a covalent cross-link: Glycyl lysine isopeptide (Lys-Gly) (interchain with G-Cter in SUMO2). ARM repeat units follow at residues 534 to 573, 583 to 624, 653 to 693, 700 to 739, 740 to 780, and 781 to 826; these read LRNV…DSDS, LRNL…AKKG, ARGY…NLCA, RYIR…NLAV, DARN…SILN, and TINE…ALVL. At Ser-617 the chain carries Phosphoserine. Positions 622–629 match the Nuclear localization signal (NLS) motif; the sequence is KKGKDEWF. A Phosphoserine modification is found at Ser-713. A phosphoserine mark is found at Ser-811, Ser-847, Ser-857, Ser-859, Ser-861, and Ser-864. The segment at 855-938 is disordered; the sequence is NASRSQSSHS…LKGAPLMQKI (84 aa). Tyr-865 carries the post-translational modification Phosphotyrosine. Ser-868 carries the post-translational modification Phosphoserine. Thr-869 is subject to Phosphothreonine. Residues 875-888 are compositionally biased toward basic and acidic residues; that stretch reads RNQKSDKKPDREEI. Residue Ser-879 is modified to Phosphoserine. Residue Lys-882 forms a Glycyl lysine isopeptide (Lys-Gly) (interchain with G-Cter in SUMO2) linkage. Residues 892 to 908 show a composition bias toward polar residues; the sequence is NMGSNTKSLDNNYSTLN. Residue Ser-899 is modified to Phosphoserine. Tyr-904 is modified (phosphotyrosine). Residues Thr-906 and Thr-916 each carry the phosphothreonine modification. Residues 909-922 show a composition bias toward basic and acidic residues; sequence ERGDHNRTLDRSGD. Ser-920 carries the phosphoserine modification.

This sequence belongs to the beta-catenin family. In terms of assembly, belongs to a multiprotein cell-cell adhesion complex that also contains E-cadherin/CDH1, alpha-catenin/CTNNA1, beta-catenin/CTNNB1, and gamma-catenin/JUP. Binds to the C-terminal fragment of PSEN1 and mutually competes for CDH1. Interacts with ZBTB33. Interacts with GLIS2. Interacts with FER. Interacts with NANOS1 (via N-terminal region). Interacts (via N-terminus) with GNA12; the interaction regulates CDH1-mediated cell-cell adhesion. Interacts with GNA13. Component of a cadherin:catenin adhesion complex composed of at least of CDH26, beta-catenin/CTNNB1, alpha-catenin/CTNNA1 and p120 catenin/CTNND1. Interacts with CCDC85B. Interacts with PLPP3; negatively regulates the PLPP3-mediated stabilization of CTNNB1. Interacts with DSG3; the interaction facilitates DSG3 localization and retention at cell-cell junctions. Interacts with CTNND1/p120-catenin; the interaction controls CADH5 endocytosis. Post-translationally, phosphorylated by FER and other protein-tyrosine kinases. Phosphorylated at Ser-288 by PAK5. Dephosphorylated by PTPRJ. In terms of tissue distribution, expressed in basal keratinocytes (at protein level).

The protein localises to the cell junction. The protein resides in the adherens junction. It is found in the cytoplasm. Its subcellular location is the nucleus. It localises to the cell membrane. Its function is as follows. Key regulator of cell-cell adhesion that associates with and regulates the cell adhesion properties of both C-, E- and N-cadherins, being critical for their surface stability. Promotes localization and retention of DSG3 at cell-cell junctions, via its interaction with DSG3. Beside cell-cell adhesion, regulates gene transcription through several transcription factors including ZBTB33/Kaiso2 and GLIS2, and the activity of Rho family GTPases and downstream cytoskeletal dynamics. Implicated both in cell transformation by SRC and in ligand-induced receptor signaling through the EGF, PDGF, CSF-1 and ERBB2 receptors. The protein is Catenin delta-1 (Ctnnd1) of Mus musculus (Mouse).